Consider the following 472-residue polypeptide: WASH complex subunit 1 (472 aa).

The tract at residues 1 to 51 (MPQNRSMESQAYSLPLILPDLRREEAIHQITDTLQHLQTVSNDIFSRILQR) is required for WASH complex assembly. 3 disordered regions span residues 289-365 (ENSR…SDGR), 377-412 (GIGKAKLRNVKEKKLEKKKMKEQEQVRATGGGGDLM), and 426-472 (ISGK…DWES). 2 stretches are compositionally biased toward pro residues: residues 301-319 (LPPPPPPPPPPPPPPPPEP) and 327-336 (SLAPPLPIPA). The VCA stretch occupies residues 352–472 (QGAPKEVVNP…GDGDEEDWES (121 aa)). The 23-residue stretch at 364 to 386 (GRASLLESIRQAGGIGKAKLRNV) folds into the WH2 domain. Over residues 385-401 (NVKEKKLEKKKMKEQEQ) the composition is skewed to basic and acidic residues.

It belongs to the WASH1 family. Component of the WASH complex.

Its subcellular location is the early endosome membrane. The protein resides in the recycling endosome membrane. Its function is as follows. Acts as a nucleation-promoting factor at the surface of endosomes, where it recruits and activates the Arp2/3 complex to induce actin polymerization, playing a key role in the fission of tubules that serve as transport intermediates during endosome sorting. The chain is WASH complex subunit 1 from Xenopus tropicalis (Western clawed frog).